We begin with the raw amino-acid sequence, 306 residues long: N-acetylmuramic acid 6-phosphate etherase (306 aa).

The 164-residue stretch at 59 to 222 folds into the SIS domain; that stretch reads TAQALGRGGR…STGVMVCLGK (164 aa). E87 functions as the Proton donor in the catalytic mechanism. E118 is a catalytic residue.

The protein belongs to the GCKR-like family. MurNAc-6-P etherase subfamily. Homodimer.

It carries out the reaction N-acetyl-D-muramate 6-phosphate + H2O = N-acetyl-D-glucosamine 6-phosphate + (R)-lactate. It participates in amino-sugar metabolism; N-acetylmuramate degradation. Specifically catalyzes the cleavage of the D-lactyl ether substituent of MurNAc 6-phosphate, producing GlcNAc 6-phosphate and D-lactate. The protein is N-acetylmuramic acid 6-phosphate etherase of Rippkaea orientalis (strain PCC 8801 / RF-1) (Cyanothece sp. (strain PCC 8801)).